The following is a 420-amino-acid chain: D-tagatose-1,6-bisphosphate aldolase subunit GatZ (420 aa).

It belongs to the GatZ/KbaZ family. GatZ subfamily. Forms a complex with GatY.

It functions in the pathway carbohydrate metabolism; D-tagatose 6-phosphate degradation; D-glyceraldehyde 3-phosphate and glycerone phosphate from D-tagatose 6-phosphate: step 2/2. Functionally, component of the tagatose-1,6-bisphosphate aldolase GatYZ that is required for full activity and stability of the Y subunit. Could have a chaperone-like function for the proper and stable folding of GatY. When expressed alone, GatZ does not show any aldolase activity. Is involved in the catabolism of galactitol. The polypeptide is D-tagatose-1,6-bisphosphate aldolase subunit GatZ (Shigella flexneri serotype 5b (strain 8401)).